We begin with the raw amino-acid sequence, 380 residues long: Probable tRNA sulfurtransferase (380 aa).

A THUMP domain is found at 58-162 (EEVIERLKKV…MAFVYAGVIE (105 aa)). ATP is bound by residues 178–179 (LL), 203–204 (YF), arginine 260, glycine 282, and glutamine 291.

Belongs to the ThiI family.

The protein resides in the cytoplasm. It catalyses the reaction [ThiI sulfur-carrier protein]-S-sulfanyl-L-cysteine + a uridine in tRNA + 2 reduced [2Fe-2S]-[ferredoxin] + ATP + H(+) = [ThiI sulfur-carrier protein]-L-cysteine + a 4-thiouridine in tRNA + 2 oxidized [2Fe-2S]-[ferredoxin] + AMP + diphosphate. The catalysed reaction is [ThiS sulfur-carrier protein]-C-terminal Gly-Gly-AMP + S-sulfanyl-L-cysteinyl-[cysteine desulfurase] + AH2 = [ThiS sulfur-carrier protein]-C-terminal-Gly-aminoethanethioate + L-cysteinyl-[cysteine desulfurase] + A + AMP + 2 H(+). Its pathway is cofactor biosynthesis; thiamine diphosphate biosynthesis. In terms of biological role, catalyzes the ATP-dependent transfer of a sulfur to tRNA to produce 4-thiouridine in position 8 of tRNAs, which functions as a near-UV photosensor. Also catalyzes the transfer of sulfur to the sulfur carrier protein ThiS, forming ThiS-thiocarboxylate. This is a step in the synthesis of thiazole, in the thiamine biosynthesis pathway. The sulfur is donated as persulfide by IscS. The sequence is that of Probable tRNA sulfurtransferase from Thermoanaerobacter sp. (strain X514).